Consider the following 577-residue polypeptide: Type I restriction enzyme MjaVII methylase subunit (577 aa).

S-adenosyl-L-methionine contacts are provided by residues 251–256, 281–283, glutamate 306, and 335–336; these read EVYTPV, SGT, and DS.

It belongs to the N4/N6-methyltransferase family. As to quaternary structure, the type I restriction/modification system is composed of three polypeptides R, M and S.

It catalyses the reaction a 2'-deoxyadenosine in DNA + S-adenosyl-L-methionine = an N(6)-methyl-2'-deoxyadenosine in DNA + S-adenosyl-L-homocysteine + H(+). Its function is as follows. The subtype gamma methyltransferase (M) subunit of a type I restriction enzyme. The M and S subunits together form a methyltransferase (MTase) that methylates A-3 on the top and bottom strands of the sequence 5'-CAAN(7)TGG-3'. In the presence of the R subunit the complex can also act as an endonuclease, binding to the same target sequence but cutting the DNA some distance from this site. Whether the DNA is cut or modified depends on the methylation state of the target sequence. When the target site is unmodified, the DNA is cut. When the target site is hemimethylated, the complex acts as a maintenance MTase modifying the DNA so that both strands become methylated. After locating a non-methylated recognition site, the enzyme complex serves as a molecular motor that translocates DNA in an ATP-dependent manner until a collision occurs that triggers cleavage. The sequence is that of Type I restriction enzyme MjaVII methylase subunit from Methanocaldococcus jannaschii (strain ATCC 43067 / DSM 2661 / JAL-1 / JCM 10045 / NBRC 100440) (Methanococcus jannaschii).